The following is a 205-amino-acid chain: Listeria nuclear targeted protein A (205 aa).

Positions 1-36 are cleaved as a signal peptide; that stretch reads MKKLVAWFNGLSKMWKVVVIIGAVFVVIIALTTGED.

In terms of assembly, interacts specifically with host BAHD1.

It localises to the secreted. It is found in the host nucleus. Functionally, relieves the repression of host cell immune response genes (interferon-stimulated genes) by blocking the recruitment of host BAHD1 to these genes. May modulate interferon-mediated immune response to control bacterial colonization of the host. The protein is Listeria nuclear targeted protein A (lntA) of Listeria monocytogenes serovar 1/2a (strain ATCC BAA-679 / EGD-e).